Here is a 329-residue protein sequence, read N- to C-terminus: Beta-ketoacyl-[acyl-carrier-protein] synthase III (329 aa).

Active-site residues include C113 and H255. Residues 256–260 (QANQR) form an ACP-binding region. N285 is a catalytic residue.

This sequence belongs to the thiolase-like superfamily. FabH family. In terms of assembly, homodimer.

The protein resides in the cytoplasm. The enzyme catalyses malonyl-[ACP] + acetyl-CoA + H(+) = 3-oxobutanoyl-[ACP] + CO2 + CoA. Its pathway is lipid metabolism; fatty acid biosynthesis. Its function is as follows. Catalyzes the condensation reaction of fatty acid synthesis by the addition to an acyl acceptor of two carbons from malonyl-ACP. Catalyzes the first condensation reaction which initiates fatty acid synthesis and may therefore play a role in governing the total rate of fatty acid production. Possesses both acetoacetyl-ACP synthase and acetyl transacylase activities. Its substrate specificity determines the biosynthesis of branched-chain and/or straight-chain of fatty acids. The polypeptide is Beta-ketoacyl-[acyl-carrier-protein] synthase III (Chlorobium phaeobacteroides (strain DSM 266 / SMG 266 / 2430)).